Here is an 80-residue protein sequence, read N- to C-terminus: Large ribosomal subunit protein bL28 (80 aa).

Residues methionine 1 to serine 21 are disordered.

Belongs to the bacterial ribosomal protein bL28 family.

The sequence is that of Large ribosomal subunit protein bL28 from Azobacteroides pseudotrichonymphae genomovar. CFP2.